A 179-amino-acid chain; its full sequence is Adenine phosphoribosyltransferase (179 aa).

The protein belongs to the purine/pyrimidine phosphoribosyltransferase family. As to quaternary structure, homodimer.

Its subcellular location is the cytoplasm. The enzyme catalyses AMP + diphosphate = 5-phospho-alpha-D-ribose 1-diphosphate + adenine. The protein operates within purine metabolism; AMP biosynthesis via salvage pathway; AMP from adenine: step 1/1. Functionally, catalyzes a salvage reaction resulting in the formation of AMP, that is energically less costly than de novo synthesis. In Beijerinckia indica subsp. indica (strain ATCC 9039 / DSM 1715 / NCIMB 8712), this protein is Adenine phosphoribosyltransferase.